The chain runs to 329 residues: Olfactory receptor 52L1 (329 aa).

At M1–H43 the chain is on the extracellular side. N20 carries N-linked (GlcNAc...) asparagine glycosylation. Residues W44–L64 form a helical membrane-spanning segment. The Cytoplasmic segment spans residues F65 to S72. Residues L73–S93 traverse the membrane as a helical segment. Topologically, residues S94 to I117 are extracellular. A disulfide bond links C115 and C207. A helical membrane pass occupies residues Q118 to L138. Topologically, residues D139–G157 are cytoplasmic. Residues V158–P178 form a helical membrane-spanning segment. Residues I179–R214 are Extracellular-facing. Residues A215–S235 form a helical membrane-spanning segment. The Cytoplasmic segment spans residues Y236–A255. Residues F256–S276 form a helical membrane-spanning segment. The Extracellular portion of the chain corresponds to F277–H291. A helical membrane pass occupies residues V292–V312. The Cytoplasmic portion of the chain corresponds to K313–D329.

It belongs to the G-protein coupled receptor 1 family.

The protein localises to the cell membrane. Functionally, odorant receptor. The sequence is that of Olfactory receptor 52L1 (OR52L1) from Homo sapiens (Human).